The chain runs to 54 residues: Large ribosomal subunit protein bL33B (54 aa).

The protein belongs to the bacterial ribosomal protein bL33 family.

The polypeptide is Large ribosomal subunit protein bL33B (Mycolicibacterium vanbaalenii (strain DSM 7251 / JCM 13017 / BCRC 16820 / KCTC 9966 / NRRL B-24157 / PYR-1) (Mycobacterium vanbaalenii)).